The chain runs to 267 residues: Hydroxyethylthiazole kinase 2 (267 aa).

Methionine 41 lines the substrate pocket. Lysine 116 and threonine 166 together coordinate ATP. Position 193 (glycine 193) interacts with substrate.

It belongs to the Thz kinase family. It depends on Mg(2+) as a cofactor.

It carries out the reaction 5-(2-hydroxyethyl)-4-methylthiazole + ATP = 4-methyl-5-(2-phosphooxyethyl)-thiazole + ADP + H(+). It functions in the pathway cofactor biosynthesis; thiamine diphosphate biosynthesis; 4-methyl-5-(2-phosphoethyl)-thiazole from 5-(2-hydroxyethyl)-4-methylthiazole: step 1/1. Catalyzes the phosphorylation of the hydroxyl group of 4-methyl-5-beta-hydroxyethylthiazole (THZ). The protein is Hydroxyethylthiazole kinase 2 of Streptococcus pneumoniae (strain P1031).